Consider the following 453-residue polypeptide: Tyrosine-protein phosphatase non-receptor type 18 (453 aa).

Residues 26–291 enclose the Tyrosine-protein phosphatase domain; it reads LAREFSDIKA…RFLYHTVAQL (266 aa). Residues Asp-197, 229 to 235, and Gln-276 each bind substrate; that span reads CSAGCGR. Residue Cys-229 is the Phosphocysteine intermediate of the active site. Phosphotyrosine occurs at positions 381 and 419. The disordered stretch occupies residues 384–453; that stretch reads VAPRAQRPVA…RDPPAEWTRV (70 aa). Basic and acidic residues predominate over residues 442–453; sequence GPRDPPAEWTRV.

This sequence belongs to the protein-tyrosine phosphatase family. Non-receptor class 4 subfamily. Interacts with PSTPIP1. In terms of tissue distribution, highest expression in bone marrow. Also expressed in kidney, lung, ovary, spleen, thymus and lymph node.

The protein localises to the nucleus. It is found in the cytoplasm. The catalysed reaction is O-phospho-L-tyrosyl-[protein] + H2O = L-tyrosyl-[protein] + phosphate. Functionally, may be involved in growth and differentiation of hematopoietic cells. This chain is Tyrosine-protein phosphatase non-receptor type 18 (Ptpn18), found in Mus musculus (Mouse).